Here is a 293-residue protein sequence, read N- to C-terminus: AKT-interacting protein homolog A (293 aa).

Positions 1 to 11 are enriched in polar residues; sequence MNPFWNMSSAS. The interval 1 to 45 is disordered; it reads MNPFWNMSSASVRKRSENDEKISTGDQKISPPRSSSAKKQLPPIP. Over residues 14–23 the composition is skewed to basic and acidic residues; that stretch reads KRSENDEKIS. Polar residues predominate over residues 24–38; the sequence is TGDQKISPPRSSSAK. A UBC core domain is found at 75–223; sequence YLEYSLLAEF…VVDSVKLCNS (149 aa). A compositionally biased stretch (basic and acidic residues) spans 256–266; the sequence is AQKKKSEEQSK. Residues 256-293 form a disordered region; sequence AQKKKSEEQSKGLHVSGLSWVKPGSVLPFSKEENSLQT.

The protein belongs to the ubiquitin-conjugating enzyme family. FTS subfamily.

The protein localises to the cytoplasm. Its subcellular location is the cell membrane. Functionally, may function to promote vesicle trafficking and/or fusion. May also regulate apoptosis. This chain is AKT-interacting protein homolog A (aktip-a), found in Xenopus laevis (African clawed frog).